The primary structure comprises 212 residues: Cytidylate kinase (212 aa).

9 to 17 (GPAAAGKGT) provides a ligand contact to ATP.

Belongs to the cytidylate kinase family. Type 1 subfamily.

The protein resides in the cytoplasm. It carries out the reaction CMP + ATP = CDP + ADP. The catalysed reaction is dCMP + ATP = dCDP + ADP. This is Cytidylate kinase from Rhizobium meliloti (strain 1021) (Ensifer meliloti).